The chain runs to 192 residues: Ribosome maturation factor RimM (192 aa).

Residues E97–V172 form the PRC barrel domain. The segment at P168 to D192 is disordered.

Belongs to the RimM family. In terms of assembly, binds ribosomal protein uS19.

It localises to the cytoplasm. Its function is as follows. An accessory protein needed during the final step in the assembly of 30S ribosomal subunit, possibly for assembly of the head region. Essential for efficient processing of 16S rRNA. May be needed both before and after RbfA during the maturation of 16S rRNA. It has affinity for free ribosomal 30S subunits but not for 70S ribosomes. The chain is Ribosome maturation factor RimM from Caulobacter sp. (strain K31).